Consider the following 267-residue polypeptide: Putative [LysW]-aminoadipate/[LysW]-glutamate kinase (267 aa).

Substrate contacts are provided by residues 37–38 (GG), Arg64, and Asn169.

It belongs to the acetylglutamate kinase family. LysZ subfamily.

The protein localises to the cytoplasm. The catalysed reaction is [amino-group carrier protein]-C-terminal-N-(1,4-dicarboxybutan-1-yl)-L-glutamine + ATP = [amino-group carrier protein]-C-terminal-N-(1-carboxy-5-phosphooxy-5-oxopentan-1-yl)-L-glutamine + ADP. The enzyme catalyses [amino-group carrier protein]-C-terminal-gamma-(L-glutamyl)-L-glutamate + ATP = [amino-group carrier protein]-C-terminal-gamma-(5-phospho-L-glutamyl)-L-glutamate + ADP. It functions in the pathway amino-acid biosynthesis; L-lysine biosynthesis via AAA pathway; L-lysine from L-alpha-aminoadipate (Thermus route): step 2/5. The protein operates within amino-acid biosynthesis; L-arginine biosynthesis. Functionally, involved in both the arginine and lysine biosynthetic pathways. Phosphorylates the LysW-bound precursors glutamate (for arginine biosynthesis), respectively alpha-aminoadipate (for lysine biosynthesis). This Nitrosopumilus maritimus (strain SCM1) protein is Putative [LysW]-aminoadipate/[LysW]-glutamate kinase.